We begin with the raw amino-acid sequence, 886 residues long: uncharacterized protein (886 aa).

A signal peptide spans 1 to 20 (MKIIKSLILLVLFMASPAKG). Transmembrane regions (helical) follow at residues 520 to 540 (VTIF…VEVV), 609 to 629 (LLFI…IITI), 647 to 667 (VIAF…IILM), 680 to 700 (ISIL…FLLI), and 779 to 799 (LLFY…TIVV). Positions 856 to 886 (EARKPQGGGEHTGKFFQNRNDVKPEQTERND) are disordered. Positions 875 to 886 (NDVKPEQTERND) are enriched in basic and acidic residues.

Belongs to the TrbL/VirB6 family.

The protein localises to the cell membrane. This is an uncharacterized protein from Rickettsia bellii (strain RML369-C).